We begin with the raw amino-acid sequence, 267 residues long: Ubiquinone biosynthesis protein COQ4 homolog, mitochondrial (267 aa).

Zn(2+) contacts are provided by histidine 170, aspartate 171, histidine 174, and glutamate 186.

The protein belongs to the COQ4 family. In terms of assembly, component of a multi-subunit COQ enzyme complex. The cofactor is Zn(2+).

It is found in the mitochondrion inner membrane. The catalysed reaction is a 4-hydroxy-3-methoxy-5-(all-trans-polyprenyl)benzoate + H(+) = a 2-methoxy-6-(all-trans-polyprenyl)phenol + CO2. It functions in the pathway cofactor biosynthesis; ubiquinone biosynthesis. In terms of biological role, lyase that catalyzes the C1-decarboxylation of 4-hydroxy-3-methoxy-5-(all-trans-polyprenyl)benzoic acid into 2-methoxy-6-(all-trans-polyprenyl)phenol during ubiquinone biosynthesis. This Drosophila pseudoobscura pseudoobscura (Fruit fly) protein is Ubiquinone biosynthesis protein COQ4 homolog, mitochondrial.